Here is a 151-residue protein sequence, read N- to C-terminus: C-C motif chemokine 25 (151 aa).

The N-terminal stretch at 1–23 (MRPWLLACLVACFVGAWAPAIHA) is a signal peptide. 2 disulfides stabilise this stretch: cysteine 30/cysteine 58 and cysteine 31/cysteine 75. The segment at 93–151 (RNKKDSKPHHSGRRFFQGPQSGVRKLSSGTSRPLLLKFSGPTRSSKRKASLLTTAIPGP) is disordered.

It belongs to the intercrine beta (chemokine CC) family.

Its subcellular location is the secreted. Its function is as follows. Potentially involved in T-cell development. Recombinant protein shows chemotactic activity on thymocytes, macrophages, THP-1 cells, and dendritics cells but is inactive on peripheral blood lymphocytes and neutrophils. Binds to CCR9. Binds to atypical chemokine receptor ACKR4 and mediates the recruitment of beta-arrestin (ARRB1/2) to ACKR4. This is C-C motif chemokine 25 (CCL25) from Sus scrofa (Pig).